Consider the following 613-residue polypeptide: DNA mismatch repair protein MutL (613 aa).

Positions 364–393 are disordered; that stretch reads EPAVARQPEAPRYSSGASAPRPTGANYPHA.

The protein belongs to the DNA mismatch repair MutL/HexB family.

In terms of biological role, this protein is involved in the repair of mismatches in DNA. It is required for dam-dependent methyl-directed DNA mismatch repair. May act as a 'molecular matchmaker', a protein that promotes the formation of a stable complex between two or more DNA-binding proteins in an ATP-dependent manner without itself being part of a final effector complex. The sequence is that of DNA mismatch repair protein MutL from Enterobacter sp. (strain 638).